A 1512-amino-acid polypeptide reads, in one-letter code: Mitogen-activated protein kinase kinase kinase 1 (1512 aa).

A compositionally biased stretch (low complexity) spans 1–13; sequence MAAAAGNRASSSG. 3 disordered regions span residues 1–37, 67–181, and 213–304; these read MAAA…SSAP, SVEL…DRPE, and VKPI…PEET. Residue A2 is modified to N-acetylalanine. 2 positions are modified to phosphoserine: S21 and S35. 3 stretches are compositionally biased toward low complexity: residues 81–99, 129–142, and 150–160; these read AASP…ADAA, AAPD…AAAE, and AAEPSPAAAPA. Phosphoserine occurs at positions 137 and 154. The segment covering 162 to 181 has biased composition (basic and acidic residues); that stretch reads REMENKETLKGLHKMDDRPE. Over residues 250 to 260 the composition is skewed to low complexity; it reads SPSPGNSPSGR. S275 carries the phosphoserine modification. T285 is subject to Phosphothreonine. Phosphoserine occurs at positions 292, 297, and 300. The SWIM-type zinc finger occupies 338 to 366; sequence YRVFIGPQNCSCARGTFCIHLLFVMLRVF. Residues 416 to 433 show a composition bias toward low complexity; it reads SNSHTLSSSSTSTSSSEN. The disordered stretch occupies residues 416 to 436; the sequence is SNSHTLSSSSTSTSSSENSIK. Residues 443 to 492 form an RING-type zinc finger; that stretch reads CPICLLGMLDEESLTVCEDGCRNKLHHHCMSIWAEECRRNREPLICPLCR. 2 positions are modified to phosphoserine: S507 and S531. Disordered stretches follow at residues 511–532 and 602–624; these read SPSS…AGSR and STGN…GSSQ. The span at 611–624 shows a compositional bias: low complexity; that stretch reads GSSPSGGATSGSSQ. A Phosphoserine modification is found at S923. Residues 933-972 form a disordered region; the sequence is SISVGPSSSTTTTTTTTEQPKPMVQTKGRPHSQCLNSSPL. Residues 939–949 show a composition bias toward low complexity; that stretch reads SSSTTTTTTTT. Residue S1018 is modified to Phosphoserine. Residues 1032 to 1041 show a composition bias toward basic and acidic residues; that stretch reads NCPENKDSDK. The segment at 1032–1087 is disordered; that stretch reads NCPENKDSDKLSPVFTQSRPLPSSNIHRPKPSRPTPGNTSKQGDPSKNSMTLDLNS. Phosphoserine is present on S1043. Polar residues-rich tracts occupy residues 1045-1057 and 1066-1087; these read VFTQ…SSNI and TPGN…DLNS. Residues 1243 to 1508 enclose the Protein kinase domain; it reads WLKGQQIGLG…SRELLKHPVF (266 aa). Residues 1249–1257 and K1272 each bind ATP; that span reads IGLGAFSSC. D1369 functions as the Proton acceptor in the catalytic mechanism. 2 positions are modified to phosphothreonine; by autocatalysis: T1400 and T1412.

Belongs to the protein kinase superfamily. STE Ser/Thr protein kinase family. MAP kinase kinase kinase subfamily. In terms of assembly, binds both upstream activators and downstream substrates in multimolecular complexes through its N-terminus. Oligomerizes after binding MAP2K4 or TRAF2. Interacts with AXIN1. Interacts (via the kinase catalytic domain) with STK38. Interacts with GRIPAP1. The cofactor is Mg(2+). Autophosphorylated.

The enzyme catalyses L-seryl-[protein] + ATP = O-phospho-L-seryl-[protein] + ADP + H(+). It catalyses the reaction L-threonyl-[protein] + ATP = O-phospho-L-threonyl-[protein] + ADP + H(+). It carries out the reaction S-ubiquitinyl-[E2 ubiquitin-conjugating enzyme]-L-cysteine + [acceptor protein]-L-lysine = [E2 ubiquitin-conjugating enzyme]-L-cysteine + N(6)-ubiquitinyl-[acceptor protein]-L-lysine.. With respect to regulation, activated by autophosphorylation on Thr-1400 and Thr-1412 following oligomerization. Its function is as follows. Component of a protein kinase signal transduction cascade. Activates the ERK and JNK kinase pathways by phosphorylation of MAP2K1 and MAP2K4. May phosphorylate the MAPK8/JNK1 kinase. Activates CHUK and IKBKB, the central protein kinases of the NF-kappa-B pathway. The protein is Mitogen-activated protein kinase kinase kinase 1 (MAP3K1) of Homo sapiens (Human).